The chain runs to 460 residues: UDP-glycosyltransferase 74B1 (460 aa).

The active-site Proton acceptor is H22. H22 serves as a coordination point for an anthocyanidin. The active-site Charge relay is the D113. The UDP-alpha-D-glucose site is built by T135, Q339, H354, W357, N358, S359, E362, D378, and Q379.

The protein belongs to the UDP-glycosyltransferase family. In terms of tissue distribution, expressed in the vasculature, the apical meristems of roots, shoots and inflorescence, and the junction of organ or branches.

The catalysed reaction is (Z)-2-phenyl-1-thioacetohydroximate + UDP-alpha-D-glucose = (Z)-desulfoglucotropeolin + UDP. It carries out the reaction a (Z)-omega-(methylsulfanyl)alkyl-thiohydroximate + UDP-alpha-D-glucose = an aliphatic (Z)-desulfo-glucosinolate + UDP. The enzyme catalyses (Z)-2-(indol-3-yl)-1-thioacetohydroximate + UDP-alpha-D-glucose = (Z)-indolylmethyl desulfoglucosinolate + UDP. In terms of biological role, involved in the biosynthesis of glucosinolate. In in vitro assay, may use phenylacetothiohydroximate (PATH), but not phenylacetic acid (PAA), indole-3-acetic acid (IAA) or salicylic acid (SA) as substrate. Specific for the thiohydroximate functional group and does not glucosylate the carboxylate group or a hydroxyl group. This is UDP-glycosyltransferase 74B1 (UGT74B1) from Arabidopsis thaliana (Mouse-ear cress).